The following is a 98-amino-acid chain: PsbF-like protein (98 aa).

Transmembrane regions (helical) follow at residues 5–25 (VLLV…WLGK) and 73–93 (TAAV…ILAM).

The protein belongs to the PsbE/PsbF family.

It is found in the membrane. Unknown. Resembles PsbF, one of the subunits of the photosystem II reaction center. However, it encodes asparagine rather than histidine at the site PsbF uses to bind heme. This is PsbF-like protein from Prochlorococcus marinus (strain MIT 9312).